The primary structure comprises 222 residues: Large ribosomal subunit protein mL64 (222 aa).

2 disordered regions span residues 21 to 47 and 186 to 222; these read RSRS…NLLT and QRKR…EPSS. The stretch at 98 to 207 forms a coiled coil; the sequence is TMQESLRLQQ…KKEARIAAMA (110 aa). A Nuclear localization signal motif is present at residues 184 to 200; that stretch reads KQQRKRLKEERQRQKKE. Residues 186–202 are compositionally biased toward basic and acidic residues; sequence QRKRLKEERQRQKKEAR. Low complexity predominate over residues 203–215; it reads IAAMASAEAQDSA.

It belongs to the mitochondrion-specific ribosomal protein mL64 family. As to quaternary structure, component of the mitochondrial ribosome large subunit (39S) which comprises a 16S rRNA and about 50 distinct proteins. Interacts with GADD45A, GADD45B and GADD45G. Interacts with NR4A1 via the NR4A1 AB domain. Interacts with ATAD3A and ATAD3B.

The protein resides in the mitochondrion. Its subcellular location is the nucleus. In terms of biological role, acts as a negative regulator of G1 to S cell cycle phase progression by inhibiting cyclin-dependent kinases. Inhibitory effects are additive with GADD45 proteins but also occur in the absence of GADD45 proteins. Acts as a repressor of the orphan nuclear receptor NR4A1 by inhibiting AB domain-mediated transcriptional activity. May be involved in the hormone-mediated regulation of NR4A1 transcriptional activity. May play a role in mitochondrial protein synthesis. The sequence is that of Large ribosomal subunit protein mL64 (Gadd45gip1) from Mus musculus (Mouse).